The following is a 504-amino-acid chain: Bifunctional purine biosynthesis protein PurH (504 aa).

The MGS-like domain occupies 1 to 144; it reads MRKRALISVY…KSFKNVVVIS (144 aa).

Belongs to the PurH family.

The catalysed reaction is (6R)-10-formyltetrahydrofolate + 5-amino-1-(5-phospho-beta-D-ribosyl)imidazole-4-carboxamide = 5-formamido-1-(5-phospho-D-ribosyl)imidazole-4-carboxamide + (6S)-5,6,7,8-tetrahydrofolate. The enzyme catalyses IMP + H2O = 5-formamido-1-(5-phospho-D-ribosyl)imidazole-4-carboxamide. The protein operates within purine metabolism; IMP biosynthesis via de novo pathway; 5-formamido-1-(5-phospho-D-ribosyl)imidazole-4-carboxamide from 5-amino-1-(5-phospho-D-ribosyl)imidazole-4-carboxamide (10-formyl THF route): step 1/1. It functions in the pathway purine metabolism; IMP biosynthesis via de novo pathway; IMP from 5-formamido-1-(5-phospho-D-ribosyl)imidazole-4-carboxamide: step 1/1. The polypeptide is Bifunctional purine biosynthesis protein PurH (Fusobacterium nucleatum subsp. nucleatum (strain ATCC 25586 / DSM 15643 / BCRC 10681 / CIP 101130 / JCM 8532 / KCTC 2640 / LMG 13131 / VPI 4355)).